A 472-amino-acid polypeptide reads, in one-letter code: UDP-N-acetylmuramate--L-alanine ligase (472 aa).

122-128 is an ATP binding site; sequence GSHGKTT.

Belongs to the MurCDEF family.

The protein resides in the cytoplasm. It carries out the reaction UDP-N-acetyl-alpha-D-muramate + L-alanine + ATP = UDP-N-acetyl-alpha-D-muramoyl-L-alanine + ADP + phosphate + H(+). The protein operates within cell wall biogenesis; peptidoglycan biosynthesis. In terms of biological role, cell wall formation. In Prochlorococcus marinus (strain SARG / CCMP1375 / SS120), this protein is UDP-N-acetylmuramate--L-alanine ligase.